Consider the following 203-residue polypeptide: ADP-ribosylation factor-like protein 6-interacting protein 1 (203 aa).

The Cytoplasmic segment spans residues 1–41 (MAEGDNRSSNLLAAETASLEEQLQGWGEVMLMADKVLRWER). Residues 42-62 (AWFPPAIMGVVSLVFLIIYYL) traverse the membrane as a helical segment. The Lumenal portion of the chain corresponds to 63-65 (DPS). A helical membrane pass occupies residues 66–86 (VLSGVSCFVMFLCLADYLVPI). The Cytoplasmic segment spans residues 87–133 (LAPRIFGSNKWTTEQQQRFHEICSNLVKTRRRAVGWWKRLFTLKEEK). Residues 134-175 (PKMYFMTMIVSLAAVAWVGQQVHNLLLTYLIVTSLLLLPGLN) form a helical membrane-spanning segment. The Lumenal portion of the chain corresponds to 176–203 (QHGIISKYIGMAKREINKLLKQKEKKNE).

It belongs to the ARL6ip family. Homooligomer. Heterodimer with ARL6IP5. Interacts with ATL1, TMEM33 and ARL6.

The protein localises to the endomembrane system. The protein resides in the endoplasmic reticulum membrane. It is found in the endoplasmic reticulum. In terms of biological role, positively regulates SLC1A1/EAAC1-mediated glutamate transport by increasing its affinity for glutamate in a PKC activity-dependent manner. Promotes the catalytic efficiency of SLC1A1/EAAC1 probably by reducing its interaction with ARL6IP5, a negative regulator of SLC1A1/EAAC1-mediated glutamate transport. Plays a role in the formation and stabilization of endoplasmic reticulum tubules. Negatively regulates apoptosis, possibly by modulating the activity of caspase-9 (CASP9). Inhibits cleavage of CASP9-dependent substrates and downstream markers of apoptosis but not CASP9 itself. May be involved in protein transport, membrane trafficking, or cell signaling during hematopoietic maturation. This Pongo abelii (Sumatran orangutan) protein is ADP-ribosylation factor-like protein 6-interacting protein 1 (ARL6IP1).